Reading from the N-terminus, the 234-residue chain is MTDLTEKNTALEEKIESAVENQQKSIWKEIFAQGIWKNNPAVVQLLGLCPLLAVSSTATNALGLGLATMLVLTCTNTVISLFRQYIPKEIRIPIYVMIIATTVTAVQLLMNAYTYTLYQSLGIFIPLIVTNCIIIGRAEAFASKNSLLHSIWDGFSMGLGMALSLTILGALREIIGQGTIFEGIENLFGEQAKFLTHHIYHTDSSFLLFILPPGAFIGLGLLLAIKNRIDNIKK.

Helical transmembrane passes span Leu-62–Phe-82, Ile-92–Ala-112, Thr-116–Gly-136, Ile-151–Leu-171, and Ser-205–Ile-225.

Belongs to the NqrDE/RnfAE family. As to quaternary structure, the complex is composed of six subunits: RnfA, RnfB, RnfC, RnfD, RnfE and RnfG.

The protein localises to the cell inner membrane. Its function is as follows. Part of a membrane-bound complex that couples electron transfer with translocation of ions across the membrane. This chain is Ion-translocating oxidoreductase complex subunit E, found in Haemophilus influenzae (strain PittGG).